We begin with the raw amino-acid sequence, 199 residues long: MAKILVLYYSSWGHMEAMAMAAARGAGEAGANVTIKRVPELVPEEVARKAHYKLEQEAQIATPLELADYDGFIFGVSTRYGMMSSQLKNFLDQTGPLWAAGKLVNKPATVMVSTATQHGGAEIALASTQLALQHHGMIIVPLSYAYQGQSGNDTVRGGAPYGMTTTSDTDGSRMPSAQELEGARFQGKRLAEITAKLVR.

Residues 4–190 (ILVLYYSSWG…EGARFQGKRL (187 aa)) form the Flavodoxin-like domain. Residues 10 to 15 (SSWGHM) and 78 to 80 (TRY) each bind FMN. W12 is a binding site for NAD(+). W98 serves as a coordination point for substrate. FMN is bound by residues 113-119 (STATQHG) and H134. The segment at 155–175 (VRGGAPYGMTTTSDTDGSRMP) is disordered.

This sequence belongs to the WrbA family. It depends on FMN as a cofactor.

It carries out the reaction a quinone + NADH + H(+) = a quinol + NAD(+). The catalysed reaction is a quinone + NADPH + H(+) = a quinol + NADP(+). The polypeptide is NAD(P)H dehydrogenase (quinone) (Chelativorans sp. (strain BNC1)).